We begin with the raw amino-acid sequence, 1005 residues long: Band 4.1-like protein 2 (1005 aa).

Positions 1 to 80 (MTTEVGSVSE…SRGISRFIPP (80 aa)) are disordered. Position 2 is an N-acetylthreonine (Thr2). Phosphoserine is present on Ser7. A compositionally biased stretch (basic and acidic residues) spans 22–31 (ATKEKPKEVA). 3 positions are modified to phosphoserine: Ser39, Ser58, and Ser87. Thr89 carries the phosphothreonine modification. Residues 93 to 196 (AKDGGDKKEP…GGAAKRETKE (104 aa)) are disordered. Basic and acidic residues-rich tracts occupy residues 111–157 (VLDK…EKPS) and 169–196 (VSKE…ETKE). Residues Lys140 and Lys144 each participate in a glycyl lysine isopeptide (Lys-Gly) (interchain with G-Cter in SUMO2) cross-link. Residues Ser170, Ser208, Ser386, Ser402, Ser499, Ser550, Ser562, Ser575, Ser598, and Ser614 each carry the phosphoserine modification. One can recognise an FERM domain in the interval 218–499 (VQCKVTLLDG…EHHTFYRLVS (282 aa)). Residues 502–610 (QPPKAKFLTL…KAPHLQLIEG (109 aa)) are hydrophilic. Residues 611–676 (KKNSLRVEGD…WEKRRITPLS (66 aa)) form a spectrin--actin-binding region. Tyr623 carries the post-translational modification Phosphotyrosine. Phosphoserine occurs at positions 627 and 647. A disordered region spans residues 652–800 (KRNFMESTPE…EEAVPEASPV (149 aa)). The segment covering 675-686 (LSLQTQGSSHET) has biased composition (polar residues). Residues 690–711 (VEEKKRAEVGKDERVITEEMNG) show a composition bias toward basic and acidic residues. Phosphoserine occurs at positions 715 and 718. The segment covering 734–746 (STSLSSESSSSSS) has biased composition (low complexity). Basic and acidic residues-rich tracts occupy residues 754 to 770 (GEYR…IREE) and 780 to 793 (EPRP…REEA). Position 763 is a phosphothreonine (Thr763). Ser828 carries the post-translational modification Phosphoserine. The segment at 855–1005 (HVDIDVLPQI…ETELAEEGED (151 aa)) is C-terminal (CTD).

In terms of assembly, interacts with FCGR1A. Interacts with TRPC4. Interacts (via CTD domain) with FKBP2. Interacts with NUMA1; this interaction is negatively regulated by CDK1 during metaphase and promotes anaphase-specific localization of NUMA1 in symmetrically dividing cells. Widely expressed.

The protein localises to the cytoplasm. The protein resides in the cytoskeleton. It is found in the cell cortex. It localises to the cell membrane. Required for dynein-dynactin complex and NUMA1 recruitment at the mitotic cell cortex during anaphase. The sequence is that of Band 4.1-like protein 2 from Homo sapiens (Human).